The sequence spans 554 residues: Terpene synthase 17 (554 aa).

Residues Asp306, Asp310, and Glu458 each coordinate Mg(2+). The DDXXD motif signature appears at 306–310 (DDTYD).

It belongs to the terpene synthase family. Tpsa subfamily. Mg(2+) serves as cofactor. Requires Mn(2+) as cofactor. As to expression, mostly expressed in stem and trichomes, to a lower extent in leaves, flowers and roots and, at low levels, in fruits.

It carries out the reaction (2Z,6Z)-farnesyl diphosphate = beta-bisabolene + diphosphate. The catalysed reaction is (2E,6E)-farnesyl diphosphate = (+)-valencene + diphosphate. The enzyme catalyses (2E,6E)-farnesyl diphosphate = (E)-beta-farnesene + diphosphate. It catalyses the reaction (2E,6E)-farnesyl diphosphate = gamma-gurjunene + diphosphate. It carries out the reaction (2Z,6Z)-farnesyl diphosphate = (E)-gamma-bisabolene + diphosphate. The catalysed reaction is (2E)-geranyl diphosphate = limonene + diphosphate. The enzyme catalyses (2E)-geranyl diphosphate = beta-myrcene + diphosphate. It catalyses the reaction (2E)-geranyl diphosphate = (E)-beta-ocimene + diphosphate. It carries out the reaction (2E)-geranyl diphosphate = terpinolene + diphosphate. The catalysed reaction is (2E)-geranyl diphosphate = gamma-terpinene + diphosphate. The enzyme catalyses (2Z,6Z)-farnesyl diphosphate = (Z)-gamma-bisabolene + diphosphate. It catalyses the reaction (2E,6E)-farnesyl diphosphate = (1S,5S,6R)-alpha-bergamotene + diphosphate. It carries out the reaction (2Z,6Z)-farnesyl diphosphate = (1S,5S,6S)-alpha-bergamotene + diphosphate. It functions in the pathway secondary metabolite biosynthesis; terpenoid biosynthesis. In terms of biological role, sesquiterpene synthase involved in the biosynthesis of volatile compounds. Mediates the conversion of (2E,6E)-farnesyl diphosphate (FPP) into gamma-gurjunene, (E)-beta-farnesene and (+)-valencene, and of (2Z,6Z)-farnesyl diphosphate ((ZZ)-FPP) into (E)-alpha-bergamotene and (Z)-gamma-bisabolene as well as beta-bisabolene, (Z)-alpha-bergamotene and (E)-gamma-bisabolene to a lower extent. Can act with a low efficiency as a monoterpene synthase with geranyl diphosphate (GPP) as substrate, thus producing beta-myrcene, (E)-beta-ocimene, limonene, terpinolene, gamma-terpinene and (Z)-beta-ocimene. The polypeptide is Terpene synthase 17 (Solanum lycopersicum (Tomato)).